The primary structure comprises 249 residues: 2,3-bisphosphoglycerate-dependent phosphoglycerate mutase (249 aa).

Residues 9–16 (RHGQSQWN), 22–23 (TG), Arg61, 88–91 (ERHY), Lys99, 115–116 (RR), and 184–185 (GN) each bind substrate. Catalysis depends on His10, which acts as the Tele-phosphohistidine intermediate. Glu88 serves as the catalytic Proton donor/acceptor.

It belongs to the phosphoglycerate mutase family. BPG-dependent PGAM subfamily. As to quaternary structure, homodimer.

It carries out the reaction (2R)-2-phosphoglycerate = (2R)-3-phosphoglycerate. Its pathway is carbohydrate degradation; glycolysis; pyruvate from D-glyceraldehyde 3-phosphate: step 3/5. Functionally, catalyzes the interconversion of 2-phosphoglycerate and 3-phosphoglycerate. The sequence is that of 2,3-bisphosphoglycerate-dependent phosphoglycerate mutase from Xanthomonas oryzae pv. oryzae (strain MAFF 311018).